Reading from the N-terminus, the 392-residue chain is Peptidoglycan hydrolase PcsB (392 aa).

The N-terminal stretch at 1-27 (MKKKILASLLLSTVMVSQVAVLTTAHA) is a signal peptide. Coiled-coil stretches lie at residues 34–96 (IAAQ…LSKN) and 191–227 (TKQAELKAAELSLAAEKATAEGEKASLLEQKAAAEAE). Positions 47–267 (QQQEAQKQVD…TAQVQAVSES (221 aa)) are interacts with large extracellular loop of FtsX. The 124-residue stretch at 267–390 (SAAAPVRAKV…TSEGFVTYIY (124 aa)) folds into the Peptidase C51 domain.

As to quaternary structure, homodimer. Interacts (via N-terminal coiled coil domain) with FtsX (via large extracellular loop). This interaction directs PcsB to equatorial and septal sites of dividing cells. Interacts with FtsE.

The protein resides in the cell membrane. It localises to the cell septum. The protein localises to the secreted. Its activity is regulated as follows. Lacks peptidoglycan-hydrolase activity in vitro, probably due to auto-inhibition by the CC domain. In the homodimer, interaction between the CC domain in one monomer and the hydrolase active site in the peptidase C51/CHAP domain in the other monomer probably mediates auto-inhibition of the hydrolase activity. Its function is as follows. Peptidoglycan-hydrolase activity. Required in maintaining normal growth and cellular morphology. Involved in splitting of the septum during cell division. This Streptococcus pneumoniae serotype 2 (strain D39 / NCTC 7466) protein is Peptidoglycan hydrolase PcsB.